We begin with the raw amino-acid sequence, 116 residues long: Nucleoid-associated protein EUBELI_02017 (116 aa).

A compositionally biased stretch (gly residues) spans 1 to 12 (MAKRGGFPGGMP). Residues 1–42 (MAKRGGFPGGMPGNMNNLMKQAQRMQRQMEEQQAELENKEFS) are disordered. Low complexity predominate over residues 13 to 26 (GNMNNLMKQAQRMQ).

Belongs to the YbaB/EbfC family. Homodimer.

It localises to the cytoplasm. The protein resides in the nucleoid. Its function is as follows. Binds to DNA and alters its conformation. May be involved in regulation of gene expression, nucleoid organization and DNA protection. In Lachnospira eligens (strain ATCC 27750 / DSM 3376 / VPI C15-48 / C15-B4) (Eubacterium eligens), this protein is Nucleoid-associated protein EUBELI_02017.